A 542-amino-acid polypeptide reads, in one-letter code: Monocarboxylate transporter 3 (542 aa).

Residues 1–19 (MGRADPEEGQLPAPVKPPD) lie on the Cytoplasmic side of the membrane. A helical transmembrane segment spans residues 20–40 (GGWGWIVLFGCFVITGFSYAF). The Extracellular segment spans residues 41 to 63 (PKAVSVYFKELMKDFHVGYSDTA). The chain crosses the membrane as a helical span at residues 64 to 84 (WISSIMLAMLYGTGPVCSIMV). Topologically, residues 85–93 (NQFGCRPVM) are cytoplasmic. Residues 94–114 (LIGGLLASSGMILASFTTNII) traverse the membrane as a helical segment. Residues 115-119 (ELYLT) are Extracellular-facing. Residues 120–140 (AGVLTGLGMALNFQPSLIMLG) form a helical membrane-spanning segment. At 141–152 (TYFDKRRPLANG) the chain is on the cytoplasmic side. Residues 153–173 (LAAAGSPVFLSSLSPLGQVLL) traverse the membrane as a helical segment. Residues 174–181 (EKFGWRGG) lie on the Extracellular side of the membrane. A helical transmembrane segment spans residues 182-202 (FLIMGGLLLNCCTCGAVMRPL). Residues 203 to 265 (DAGMKRKTEK…LDFSIFSNRG (63 aa)) lie on the Cytoplasmic side of the membrane. The interval 226–247 (GGKSEEGISTTDGTKKTKKAKK) is disordered. Residues 266–286 (FIIYTISKFILVLGLFVPPIL) form a helical membrane-spanning segment. The Extracellular segment spans residues 287–301 (LVNYAKDTGVPDTEA). A helical membrane pass occupies residues 302–322 (AFLLSIIGFIDIFARPACGMV). The Cytoplasmic portion of the chain corresponds to 323–330 (AGLKWVRP). Residues 331–351 (HVAYLFSFAMLFNGLTDICSA) form a helical membrane-spanning segment. Over 352–357 (RASNYT) the chain is Extracellular. A helical membrane pass occupies residues 358–378 (GLVIFCVFFGISYGMVGALQF). Residues 379–392 (EVLMAIVGSQKFSS) lie on the Cytoplasmic side of the membrane. Residues 393–413 (AIGLVLLIEAFAVLIGPPSAG) form a helical membrane-spanning segment. Topologically, residues 414-423 (RLVDALKNYE) are extracellular. Residues 424–444 (VIFYLAGSEVVLSALFLAMAT) traverse the membrane as a helical segment. The Cytoplasmic portion of the chain corresponds to 445 to 542 (YCCLNRGKKT…ADQTVERDSF (98 aa)). Residues 453 to 542 (KTPPPEKNPS…ADQTVERDSF (90 aa)) form a disordered region. Basolateral sorting signal stretches follow at residues 465–510 (GGSD…VEDE) and 511–532 (QSGEGGRCPEADGEVSSRAGCN). The span at 468-478 (DTEEAESDVQE) shows a compositional bias: acidic residues.

Belongs to the major facilitator superfamily. Monocarboxylate porter (TC 2.A.1.13) family. As to expression, retinal pigment epithelium.

It localises to the basolateral cell membrane. The enzyme catalyses (S)-lactate(in) + H(+)(in) = (S)-lactate(out) + H(+)(out). Probable retinal pigment epithelium (RPE)-specific proton-coupled L-lactate transporter. May facilitate transport of lactate and H(+) out of the retina and could therefore play a role in pH and ion homeostasis of the outer retina. This is Monocarboxylate transporter 3 (SLC16A8) from Gallus gallus (Chicken).